The primary structure comprises 577 residues: Arginine--tRNA ligase (577 aa).

Residues 122–132 carry the 'HIGH' region motif; sequence PNVAKEMHVGH.

The protein belongs to the class-I aminoacyl-tRNA synthetase family. Monomer.

It is found in the cytoplasm. It catalyses the reaction tRNA(Arg) + L-arginine + ATP = L-arginyl-tRNA(Arg) + AMP + diphosphate. The protein is Arginine--tRNA ligase of Salmonella paratyphi A (strain ATCC 9150 / SARB42).